The following is a 111-amino-acid chain: Phosphoribosyl-ATP pyrophosphatase (111 aa).

Belongs to the PRA-PH family.

The protein resides in the cytoplasm. The catalysed reaction is 1-(5-phospho-beta-D-ribosyl)-ATP + H2O = 1-(5-phospho-beta-D-ribosyl)-5'-AMP + diphosphate + H(+). Its pathway is amino-acid biosynthesis; L-histidine biosynthesis; L-histidine from 5-phospho-alpha-D-ribose 1-diphosphate: step 2/9. The polypeptide is Phosphoribosyl-ATP pyrophosphatase (Pseudomonas putida (strain GB-1)).